Here is a 236-residue protein sequence, read N- to C-terminus: Small ribosomal subunit protein uS2c (236 aa).

The protein belongs to the universal ribosomal protein uS2 family.

It localises to the plastid. Its subcellular location is the chloroplast. In Carica papaya (Papaya), this protein is Small ribosomal subunit protein uS2c (rps2).